The sequence spans 268 residues: Phosphatidylglycerol--prolipoprotein diacylglyceryl transferase (268 aa).

7 consecutive transmembrane segments (helical) span residues 21–41, 54–74, 93–113, 122–142, 173–193, 203–223, and 236–256; these read WYGIIIVSAIALSIWLGGRFA, FAIILVPAGILGARLYEVFVL, GLAIHGAVLGGAIAAAIYLPM, ADVVGLVLPLAQAIGRWGNFF, VMHPTFLYESVWNLLTFGILL, GVVFSLYLVLYNAGRFLIESI, and VAQLVAAVLAILGLVLLAWFL. Residue Arg-137 participates in a 1,2-diacyl-sn-glycero-3-phospho-(1'-sn-glycerol) binding.

The protein belongs to the Lgt family.

The protein localises to the cell membrane. It carries out the reaction L-cysteinyl-[prolipoprotein] + a 1,2-diacyl-sn-glycero-3-phospho-(1'-sn-glycerol) = an S-1,2-diacyl-sn-glyceryl-L-cysteinyl-[prolipoprotein] + sn-glycerol 1-phosphate + H(+). It participates in protein modification; lipoprotein biosynthesis (diacylglyceryl transfer). Catalyzes the transfer of the diacylglyceryl group from phosphatidylglycerol to the sulfhydryl group of the N-terminal cysteine of a prolipoprotein, the first step in the formation of mature lipoproteins. The protein is Phosphatidylglycerol--prolipoprotein diacylglyceryl transferase of Symbiobacterium thermophilum (strain DSM 24528 / JCM 14929 / IAM 14863 / T).